Reading from the N-terminus, the 316-residue chain is L-lactate dehydrogenase 1 (316 aa).

Residues Val-17, Asp-38, Lys-43, and Tyr-69 each coordinate NAD(+). Substrate-binding positions include Arg-92 and 124-127; that span reads NPVD. NAD(+)-binding positions include 122 to 124 and Thr-147; that span reads VSN. Position 152 to 155 (152 to 155) interacts with substrate; sequence DTSR. Catalysis depends on His-179, which acts as the Proton acceptor. Thr-234 lines the substrate pocket.

Belongs to the LDH/MDH superfamily. LDH family. In terms of assembly, homotetramer.

It localises to the cytoplasm. The enzyme catalyses (S)-lactate + NAD(+) = pyruvate + NADH + H(+). Its pathway is fermentation; pyruvate fermentation to lactate; (S)-lactate from pyruvate: step 1/1. Its function is as follows. Catalyzes the conversion of lactate to pyruvate. This Bifidobacterium longum subsp. longum (strain ATCC 15707 / DSM 20219 / JCM 1217 / NCTC 11818 / E194b) protein is L-lactate dehydrogenase 1.